The chain runs to 426 residues: Glucose-6-phosphate isomerase (426 aa).

Glutamate 282 acts as the Proton donor in catalysis. Residues histidine 303 and lysine 419 contribute to the active site.

The protein belongs to the GPI family.

It is found in the cytoplasm. It carries out the reaction alpha-D-glucose 6-phosphate = beta-D-fructose 6-phosphate. Its pathway is carbohydrate biosynthesis; gluconeogenesis. It participates in carbohydrate degradation; glycolysis; D-glyceraldehyde 3-phosphate and glycerone phosphate from D-glucose: step 2/4. Functionally, catalyzes the reversible isomerization of glucose-6-phosphate to fructose-6-phosphate. The sequence is that of Glucose-6-phosphate isomerase from Mycoplasmoides gallisepticum (strain R(low / passage 15 / clone 2)) (Mycoplasma gallisepticum).